The primary structure comprises 624 residues: PTS system mannitol-specific EIICBA component (624 aa).

Residues 13–336 form the PTS EIIC type-2 domain; sequence FGRFLSNMVM…SFVIASFFLK (324 aa). 6 helical membrane passes run 25–46, 51–71, 135–156, 166–186, 274–293, and 314–335; these read IGAF…WLPN, KLVG…SGGK, SSGI…PAVK, VDIL…EPAK, VIAG…AGLV, and VGVL…SFFL. Residues 372–463 enclose the PTS EIIB type-2 domain; sequence QKIFVACDAG…LVQDLSNTKV (92 aa). The Phosphocysteine intermediate; for EIIB activity role is filled by cysteine 378. Phosphocysteine; by EIIA is present on cysteine 378. One can recognise a PTS EIIA type-2 domain in the interval 482–624; the sequence is FVLTEKQVFL…VEKVLALLKA (143 aa). Histidine 542 acts as the Tele-phosphohistidine intermediate; for EIIA activity in catalysis. Histidine 542 carries the phosphohistidine; by HPr modification.

In terms of assembly, homodimer. An intramolecular phosphotransfer takes places between His-542 and Cys-378.

It localises to the cell inner membrane. The enzyme catalyses D-mannitol(out) + N(pros)-phospho-L-histidyl-[protein] = D-mannitol 1-phosphate(in) + L-histidyl-[protein]. Functionally, the phosphoenolpyruvate-dependent sugar phosphotransferase system (sugar PTS), a major carbohydrate active transport system, catalyzes the phosphorylation of incoming sugar substrates concomitantly with their translocation across the cell membrane. This system is involved in D-mannitol transport. This is PTS system mannitol-specific EIICBA component (mtlA) from Pasteurella multocida (strain Pm70).